We begin with the raw amino-acid sequence, 457 residues long: Chromosomal replication initiator protein DnaA (457 aa).

A domain I, interacts with DnaA modulators region spans residues 1–90 (MAVSLWQQCI…RPSAKPQAPA (90 aa)). Residues 79–120 (GSRPSAKPQAPAPAAVKAAAPQPKPGNSFVSQPEPAVSNHRS) form a disordered region. Low complexity predominate over residues 84–99 (AKPQAPAPAAVKAAAP). The interval 91 to 120 (PAAVKAAAPQPKPGNSFVSQPEPAVSNHRS) is domain II. Residues 121–337 (NINPTYQFDN…GALNRVIANA (217 aa)) form a domain III, AAA+ region region. The ATP site is built by G165, G167, K168, and T169. The domain IV, binds dsDNA stretch occupies residues 338-457 (NFTGRPITID…YANLIRTLSS (120 aa)).

It belongs to the DnaA family. As to quaternary structure, oligomerizes as a right-handed, spiral filament on DNA at oriC.

It localises to the cytoplasm. Functionally, plays an essential role in the initiation and regulation of chromosomal replication. ATP-DnaA binds to the origin of replication (oriC) to initiate formation of the DNA replication initiation complex once per cell cycle. Binds the DnaA box (a 9 base pair repeat at the origin) and separates the double-stranded (ds)DNA. Forms a right-handed helical filament on oriC DNA; dsDNA binds to the exterior of the filament while single-stranded (ss)DNA is stabiized in the filament's interior. The ATP-DnaA-oriC complex binds and stabilizes one strand of the AT-rich DNA unwinding element (DUE), permitting loading of DNA polymerase. After initiation quickly degrades to an ADP-DnaA complex that is not apt for DNA replication. Binds acidic phospholipids. This chain is Chromosomal replication initiator protein DnaA, found in Shewanella amazonensis (strain ATCC BAA-1098 / SB2B).